The sequence spans 455 residues: Protein 60A (455 aa).

An N-terminal signal peptide occupies residues 1–36 (MSGLRNTSEAVAVLASLGLGMVLLMFVATTPPAVEA). A propeptide spanning residues 37–335 (TQSGIYIDNG…SASHPRKRKK (299 aa)) is cleaved from the precursor. Residues 108–118 (GLSDQDEDDDY) are compositionally biased toward acidic residues. The interval 108–138 (GLSDQDEDDDYERGHRSRRSADLEEDEGEQQ) is disordered. Asn238 and Asn250 each carry an N-linked (GlcNAc...) asparagine glycan. Residues 316–345 (AHSSHHRSKRSASHPRKRKKSVSPNNVPLL) form a disordered region. The span at 318–336 (SSHHRSKRSASHPRKRKKS) shows a compositional bias: basic residues. 3 disulfide bridges follow: Cys354/Cys420, Cys383/Cys452, and Cys387/Cys454. Residue Asn396 is glycosylated (N-linked (GlcNAc...) asparagine).

Belongs to the TGF-beta family. Homodimer; disulfide-linked. Interacts with nord and dpp. As to expression, expressed in cells of the developing foregut and hindgut during germ band retraction and later embryonic stages. Expressed in the wing disk, mainly in the posterior compartment in the pteropleural and medial regions extending into the progenitors of the scutellum. High levels are found within the posterior and anterior compartments of the wing pouch and low levels in the hinge region. In the eye/antennal disk, expression is highest anterior to the morphogenetic furrow and in the medial regions with lower levels of expression posterior to the morphogenetic furrow. Expressed throughout the posterior compartment of the leg imaginal disks and within the ventral anterior compartment.

Its subcellular location is the secreted. Required for the growth of imaginal tissues and for patterning of the adult wing. The sequence is that of Protein 60A (gbb) from Drosophila melanogaster (Fruit fly).